The following is a 401-amino-acid chain: tRNA pseudouridine synthase Pus10 (401 aa).

Residues 64–195 form the THUMP domain; the sequence is ALAKSGHRES…DGSVSVEVMP (132 aa).

This sequence belongs to the pseudouridine synthase Pus10 family.

It catalyses the reaction uridine(54) in tRNA = pseudouridine(54) in tRNA. The enzyme catalyses uridine(55) in tRNA = pseudouridine(55) in tRNA. Responsible for synthesis of pseudouridine from uracil-54 and uracil-55 in the psi GC loop of transfer RNAs. The protein is tRNA pseudouridine synthase Pus10 of Caldivirga maquilingensis (strain ATCC 700844 / DSM 13496 / JCM 10307 / IC-167).